We begin with the raw amino-acid sequence, 359 residues long: Chorismate synthase (359 aa).

R47 contributes to the NADP(+) binding site. Residues R123–S125, G283, K298–S302, and R326 each bind FMN.

This sequence belongs to the chorismate synthase family. Homotetramer. FMNH2 serves as cofactor.

The catalysed reaction is 5-O-(1-carboxyvinyl)-3-phosphoshikimate = chorismate + phosphate. It participates in metabolic intermediate biosynthesis; chorismate biosynthesis; chorismate from D-erythrose 4-phosphate and phosphoenolpyruvate: step 7/7. Catalyzes the anti-1,4-elimination of the C-3 phosphate and the C-6 proR hydrogen from 5-enolpyruvylshikimate-3-phosphate (EPSP) to yield chorismate, which is the branch point compound that serves as the starting substrate for the three terminal pathways of aromatic amino acid biosynthesis. This reaction introduces a second double bond into the aromatic ring system. The sequence is that of Chorismate synthase from Chlamydia pneumoniae (Chlamydophila pneumoniae).